Here is a 356-residue protein sequence, read N- to C-terminus: tRNA-specific 2-thiouridylase MnmA (356 aa).

ATP is bound by residues 6-13 and Leu-32; that span reads GMSGGVDS. The active-site Nucleophile is the Cys-102. Cys-102 and Cys-200 are oxidised to a cystine. ATP is bound at residue Gly-127. Positions 150-152 are interaction with tRNA; it reads RDQ. Catalysis depends on Cys-200, which acts as the Cysteine persulfide intermediate. The interaction with tRNA stretch occupies residues 302 to 303; it reads RY.

The protein belongs to the MnmA/TRMU family.

Its subcellular location is the cytoplasm. The catalysed reaction is S-sulfanyl-L-cysteinyl-[protein] + uridine(34) in tRNA + AH2 + ATP = 2-thiouridine(34) in tRNA + L-cysteinyl-[protein] + A + AMP + diphosphate + H(+). Its function is as follows. Catalyzes the 2-thiolation of uridine at the wobble position (U34) of tRNA, leading to the formation of s(2)U34. The protein is tRNA-specific 2-thiouridylase MnmA of Aquifex aeolicus (strain VF5).